Here is a 228-residue protein sequence, read N- to C-terminus: 2-C-methyl-D-erythritol 4-phosphate cytidylyltransferase (228 aa).

This sequence belongs to the IspD/TarI cytidylyltransferase family. IspD subfamily.

The catalysed reaction is 2-C-methyl-D-erythritol 4-phosphate + CTP + H(+) = 4-CDP-2-C-methyl-D-erythritol + diphosphate. It participates in isoprenoid biosynthesis; isopentenyl diphosphate biosynthesis via DXP pathway; isopentenyl diphosphate from 1-deoxy-D-xylulose 5-phosphate: step 2/6. Its function is as follows. Catalyzes the formation of 4-diphosphocytidyl-2-C-methyl-D-erythritol from CTP and 2-C-methyl-D-erythritol 4-phosphate (MEP). This Geobacillus kaustophilus (strain HTA426) protein is 2-C-methyl-D-erythritol 4-phosphate cytidylyltransferase.